A 348-amino-acid chain; its full sequence is Glycerol-1-phosphate dehydrogenase [NAD(P)+] (348 aa).

NAD(+)-binding positions include 94–98 (GKVID) and T116. D121 contributes to the substrate binding site. S125 contributes to the NAD(+) binding site. Residue D168 coordinates substrate. Positions 168 and 248 each coordinate Zn(2+). H252 contacts substrate. H264 contributes to the Zn(2+) binding site.

The protein belongs to the glycerol-1-phosphate dehydrogenase family. As to quaternary structure, homooctamer. Zn(2+) serves as cofactor.

It localises to the cytoplasm. It catalyses the reaction sn-glycerol 1-phosphate + NAD(+) = dihydroxyacetone phosphate + NADH + H(+). It carries out the reaction sn-glycerol 1-phosphate + NADP(+) = dihydroxyacetone phosphate + NADPH + H(+). Its pathway is membrane lipid metabolism; glycerophospholipid metabolism. Functionally, catalyzes the NAD(P)H-dependent reduction of dihydroxyacetonephosphate (DHAP or glycerone phosphate) to glycerol 1-phosphate (G1P). The G1P thus generated is used as the glycerophosphate backbone of phospholipids in the cellular membranes of Archaea. The sequence is that of Glycerol-1-phosphate dehydrogenase [NAD(P)+] from Methanosphaera stadtmanae (strain ATCC 43021 / DSM 3091 / JCM 11832 / MCB-3).